A 3589-amino-acid chain; its full sequence is D-lysergyl-peptide-synthetase subunit 1 (3589 aa).

The interval 344-742 (NCHSRPDSLA…IGRKDLQVKV (399 aa)) is adenylation (A) domain 1. The region spanning 883–952 (VERRLQLLFA…KLRDLAAASS (70 aa)) is the Carrier 1 domain. Ser915 is subject to O-(pantetheine 4'-phosphoryl)serine. The interval 995–1380 (EDIYPCTSLQ…SQFQHILTQI (386 aa)) is condensation (C) domain 1. Residues 1424–1826 (QAKAQMQPEA…RRKDSQVKLR (403 aa)) form an adenylation (A) domain 2 region. One can recognise a Carrier 2 domain in the interval 1974–2042 (LERELQKIWA…TIEKLAAAAV (69 aa)). Residue Ser2006 is modified to O-(pantetheine 4'-phosphoryl)serine. The condensation (C) domain 2 stretch occupies residues 2087 to 2509 (VEDIYPCSPI…IEMLDEEHRS (423 aa)). The tract at residues 2534–2929 (CLESPESPAI…GRKDDQVKIR (396 aa)) is adenylation (A) domain 3. In terms of domain architecture, Carrier 3 spans 3064–3132 (LETRLQELVG…RLSELAVVLN (69 aa)). Ser3096 carries the O-(pantetheine 4'-phosphoryl)serine modification. A cyclization (Cyc) domain region spans residues 3187–3585 (TNFIALHFSQ…TYPESLVSEL (399 aa)).

The protein belongs to the NRP synthetase family.

It functions in the pathway alkaloid biosynthesis; ergot alkaloid biosynthesis. Its function is as follows. D-lysergyl-peptide-synthetase subunit 1; part of the gene cluster that mediates the biosynthesis of fungal ergot alkaloid ergovaline, the predominant ergopeptine product in E.festucae var. lolii. DmaW catalyzes the first step of ergot alkaloid biosynthesis by condensing dimethylallyl diphosphate (DMAP) and tryptophan to form 4-dimethylallyl-L-tryptophan. The second step is catalyzed by the methyltransferase easF that methylates 4-dimethylallyl-L-tryptophan in the presence of S-adenosyl-L-methionine, resulting in the formation of 4-dimethylallyl-L-abrine. The catalase easC and the FAD-dependent oxidoreductase easE then transform 4-dimethylallyl-L-abrine to chanoclavine-I which is further oxidized by easD in the presence of NAD(+), resulting in the formation of chanoclavine-I aldehyde. Agroclavine dehydrogenase easG then mediates the conversion of chanoclavine-I aldehyde to agroclavine via a non-enzymatic adduct reaction: the substrate is an iminium intermediate that is formed spontaneously from chanoclavine-I aldehyde in the presence of glutathione. The presence of easA is not required to complete this reaction. Further conversion of agroclavine to paspalic acid is a two-step process involving oxidation of agroclavine to elymoclavine and of elymoclavine to paspalic acid, the second step being performed by the elymoclavine oxidase cloA. Paspalic acid is then further converted to D-lysergic acid. Ergovaline is assembled from D-lysergic acid and three different amino acids by the D-lysergyl-peptide-synthetase composed of a monomudular (lpsB) and a trimodular (lpsA) nonribosomal peptide synthetase subunit. The polypeptide is D-lysergyl-peptide-synthetase subunit 1 (Epichloe festucae var. lolii (Neotyphodium lolii)).